Reading from the N-terminus, the 635-residue chain is MNYTLNQHYEEKVRPSIDLIDSLRSLGVEKDLALPAIAVIGDQSSGKSSVLEALSGVALPRGSGIVTRCPLELKMKRKKEGEEWHGKISYQDREEEIEDPSDVENKIRKAQDEMAGVGVGISDDLISLEIGSPDVPDLTLIDLPGIARVAVKGQPENIGEQIKRLIRKFITKQETINLVVVPCNVDIATTEALKMAQEVDPDGERTLGILTKPDLVDKGTEETVVDIVHNEVIQLTKGYMIVKCRGQKEIMERVSLTEATEREKAFFKEHAHLSTLYDEGHATIPKLAEKLTLELVQHIEKSMPRLKEQIEEKLEETRTALEKCGTGPPEDPKERLYFLIDKVTLFTQDAINLSTGEELKSGDINVFSTLRTEFGKWKAYVDRSGKNFNKKIEKEVADYEKRYRGRELPGFINYKTFEVIVKDQIKQLEEPAVKKLKELSDAARKAFILLAQNSFTGFPILLKTAKTKIETIKQEKESTAESTLRTQFKMELIVYTQDSTYSSSLKKRKREEEELEEGELVKNNLGSWKGLPVVSVRSTVNGLDTHATLREMMLHLKSYYHIASQRLADQIPMVIRYLVLQEFASQLQREMLQTLQEKDNIEQLLKEDIDIGSKRAALQSKLKRLMKAHNYLVEF.

The region spanning 31–304 (DLALPAIAVI…LVQHIEKSMP (274 aa)) is the Dynamin-type G domain. Positions 41–48 (GDQSSGKS) are G1 motif. Residue 41-48 (GDQSSGKS) participates in GTP binding. The segment at 66–68 (VTR) is G2 motif. Residues 142 to 145 (DLPG) form a G3 motif region. GTP is bound by residues 142–146 (DLPGI) and 211–214 (TKPD). The G4 motif stretch occupies residues 211–214 (TKPD). Residues 243–246 (KCRG) are G5 motif. Residues 549–635 (LREMMLHLKS…MKAHNYLVEF (87 aa)) form the GED domain.

Belongs to the TRAFAC class dynamin-like GTPase superfamily. Dynamin/Fzo/YdjA family.

It localises to the nucleus. It is found in the cytoplasm. Its function is as follows. Does not inhibit strain RB-1 of the fish pathogen, infectious hematopoietic necrosis virus (IHNV). This chain is Interferon-induced GTP-binding protein Mx2, found in Oncorhynchus mykiss (Rainbow trout).